Here is a 103-residue protein sequence, read N- to C-terminus: Protein reprimo A (103 aa).

Residues 50 to 70 form a helical membrane-spanning segment; the sequence is IVQIAVMCVLSLTVVFGIFFL.

It belongs to the reprimo family.

Its subcellular location is the cytoplasm. It is found in the membrane. May be involved in the regulation of p53-dependent G2 arrest of the cell cycle. The chain is Protein reprimo A from Danio rerio (Zebrafish).